Here is a 130-residue protein sequence, read N- to C-terminus: Cholecystokinin (130 aa).

Residues 1–20 form the signal peptide; the sequence is MYSGICIYMFLAMLSTSSSG. Positions 21 to 60 are excised as a propeptide; the sequence is QQATGSHNENPVATELEQSLTEHHRHVRVPSSAGQLKPIQ. Residue Tyr-112 is modified to Sulfotyrosine. Phe-118 carries the phenylalanine amide modification. The propeptide occupies 122-130; the sequence is SAEEYEYSS. 2 positions are modified to sulfotyrosine: Tyr-126 and Tyr-128.

The protein belongs to the gastrin/cholecystokinin family. In terms of processing, the precursor is cleaved by proteases to produce a number of active cholecystokinins. As to expression, expressed in brain, duodenum and small intestine.

It is found in the secreted. This peptide hormone induces gall bladder contraction and the release of pancreatic enzymes in the gut. Its function in the brain is not clear. This is Cholecystokinin from Trachemys scripta (Red-eared slider turtle).